Here is an 83-residue protein sequence, read N- to C-terminus: Small ribosomal subunit protein uS17 (83 aa).

Belongs to the universal ribosomal protein uS17 family. Part of the 30S ribosomal subunit.

One of the primary rRNA binding proteins, it binds specifically to the 5'-end of 16S ribosomal RNA. The chain is Small ribosomal subunit protein uS17 from Nitratiruptor sp. (strain SB155-2).